The following is a 229-amino-acid chain: Ras-related protein Rab-33B (229 aa).

Positions 43, 44, 45, 46, 47, 48, 62, and 65 each coordinate GTP. Thr47 provides a ligand contact to Mg(2+). The Switch 1 motif lies at 56 to 68; the sequence is GRFPDRTEATIGV. Positions 65 and 88 each coordinate Mg(2+). Positions 89–108 match the Switch 2 motif; the sequence is TAGQERFRKSMVQHYYRNVH. Residues Gly91, Asn148, Lys149, Asp151, Ala179, and Lys180 each coordinate GTP. 2 S-geranylgeranyl cysteine lipidation sites follow: Cys227 and Cys229. The residue at position 229 (Cys229) is a Cysteine methyl ester.

This sequence belongs to the small GTPase superfamily. Rab family. As to quaternary structure, interacts (GTP- and GDP-bound forms) with ATG16L1; the complex consists of a tetramer where two RAB33B molecules bind independently one molecule of the ATG16L1 homodimer; the interaction promotes ATG12-ATG5-ATG16L1 complex recruitment to phagophores. Interacts with ATG16L2; however interaction is approximately hundred times lower than for ATG16L1. Interacts with RIC1 (via C-terminus domain); the interaction is direct with a preference for RAB33B-GTP. Interacts with RGP1. Mg(2+) is required as a cofactor. Prenylated. Ubiquitous.

The protein resides in the golgi apparatus membrane. Its subcellular location is the golgi apparatus. The protein localises to the cis-Golgi network. It localises to the preautophagosomal structure membrane. The catalysed reaction is GTP + H2O = GDP + phosphate + H(+). With respect to regulation, regulated by guanine nucleotide exchange factors (GEFs) which promote the exchange of bound GDP for free GTP. Regulated by GTPase activating proteins (GAPs) such as SGSM2 which increase the GTP hydrolysis activity. Inhibited by GDP dissociation inhibitors (GDIs). Its function is as follows. The small GTPases Rab are key regulators of intracellular membrane trafficking, from the formation of transport vesicles to their fusion with membranes. Rabs cycle between an inactive GDP-bound form and an active GTP-bound form that is able to recruit to membranes different sets of downstream effectors directly responsible for vesicle formation, movement, tethering and fusion. RAB33B acts, in coordination with RAB6A, to regulate intra-Golgi retrograde trafficking. Participates in autophagosome formation by recruiting the ATG12-ATG5-ATG16L1 complex to phagophores, probably in a nucleotide-independent manner. This is Ras-related protein Rab-33B from Mus musculus (Mouse).